Reading from the N-terminus, the 1690-residue chain is DNA-directed RNA polymerase subunit beta' (1690 aa).

Cysteine 63, cysteine 65, cysteine 78, and cysteine 81 together coordinate Zn(2+). Mg(2+) contacts are provided by aspartate 753, aspartate 755, and aspartate 757. Residues cysteine 1107, cysteine 1295, cysteine 1302, and cysteine 1305 each coordinate Zn(2+).

Belongs to the RNA polymerase beta' chain family. As to quaternary structure, the RNAP catalytic core consists of 2 alpha, 1 beta, 1 beta' and 1 omega subunit. When a sigma factor is associated with the core the holoenzyme is formed, which can initiate transcription. Requires Mg(2+) as cofactor. It depends on Zn(2+) as a cofactor.

The enzyme catalyses RNA(n) + a ribonucleoside 5'-triphosphate = RNA(n+1) + diphosphate. In terms of biological role, DNA-dependent RNA polymerase catalyzes the transcription of DNA into RNA using the four ribonucleoside triphosphates as substrates. This is DNA-directed RNA polymerase subunit beta' from Thermotoga neapolitana (strain ATCC 49049 / DSM 4359 / NBRC 107923 / NS-E).